Reading from the N-terminus, the 87-residue chain is Putative autophagy-related protein 8E (87 aa).

Positions 1 to 14 (MEERRKEKGKEGRR) are enriched in basic and acidic residues. Residues 1–30 (MEERRKEKGKEGRRGKATGHSVDKFSRSNL) are disordered. A lipid anchor (Phosphatidylethanolamine amidated glycine) is attached at Gly87.

This sequence belongs to the ATG8 family. As to quaternary structure, interacts with ATG4. The C-terminal Gly is amidated with phosphatidylethanolamine by an activating system similar to that for ubiquitin.

It is found in the cytoplasmic vesicle. The protein resides in the autophagosome membrane. The protein localises to the vacuole membrane. It localises to the cytoplasm. Its subcellular location is the cytoskeleton. Its function is as follows. Ubiquitin-like modifier involved in autophagosomes formation. May mediate the delivery of the autophagosomes to the vacuole via the microtubule cytoskeleton. The sequence is that of Putative autophagy-related protein 8E (ATG8E) from Oryza sativa subsp. japonica (Rice).